A 455-amino-acid polypeptide reads, in one-letter code: tRNA modification GTPase MnmE (455 aa).

Residues Lys29, Glu91, and Arg131 each coordinate (6S)-5-formyl-5,6,7,8-tetrahydrofolate. One can recognise a TrmE-type G domain in the interval 226-378; the sequence is GLKVALVGLP…LIQELLKLAG (153 aa). Asn236 contacts K(+). Residues 236–241, 255–261, 280–283, and 341–344 each bind GTP; these read NVGKSS, TDLPGTT, DTAG, and NKAD. Ser240 is a Mg(2+) binding site. Positions 255, 257, and 260 each coordinate K(+). A Mg(2+)-binding site is contributed by Thr261. Position 455 (Lys455) interacts with (6S)-5-formyl-5,6,7,8-tetrahydrofolate.

The protein belongs to the TRAFAC class TrmE-Era-EngA-EngB-Septin-like GTPase superfamily. TrmE GTPase family. As to quaternary structure, homodimer. Heterotetramer of two MnmE and two MnmG subunits. It depends on K(+) as a cofactor.

It is found in the cytoplasm. In terms of biological role, exhibits a very high intrinsic GTPase hydrolysis rate. Involved in the addition of a carboxymethylaminomethyl (cmnm) group at the wobble position (U34) of certain tRNAs, forming tRNA-cmnm(5)s(2)U34. This chain is tRNA modification GTPase MnmE, found in Prochlorococcus marinus (strain SARG / CCMP1375 / SS120).